We begin with the raw amino-acid sequence, 705 residues long: Variediene synthase (705 aa).

The segment at 9-331 is terpene cyclase; that stretch reads LNSTLSSVVE…RCPRYHPWLC (323 aa). Asp100 is a binding site for Mg(2+). Residues Asp100, 186-189, Asn230, 234-238, and 325-326 contribute to the substrate site; these read RIID, SFDIE, and RY. The DDXXD 1 motif lies at 100–104; it reads DNVVE. The NSE/DTE motif lies at 230 to 238; that stretch reads NDYFSFDIE. The interval 332 to 705 is prenyltransferase; the sequence is KEAASLLHQD…VRLLIHRLKV (374 aa). Basic and acidic residues predominate over residues 349–366; sequence GRKPQALEEYRSRSHSES. Residues 349-374 form a disordered region; sequence GRKPQALEEYRSRSHSESDLSDASPT. The isopentenyl diphosphate site is built by Lys424, Arg427, and His456. Positions 463 and 467 each coordinate Mg(2+). Residues 463–467 carry the DDXXD 2 motif; sequence DDIED. Arg472 lines the dimethylallyl diphosphate pocket. Residue Arg473 coordinates isopentenyl diphosphate. Residues Lys550, Thr551, Gln589, Asn596, Lys605, and Lys615 each coordinate dimethylallyl diphosphate.

This sequence in the N-terminal section; belongs to the terpene synthase family. It in the C-terminal section; belongs to the FPP/GGPP synthase family. As to quaternary structure, hexamer. It depends on Mg(2+) as a cofactor.

The enzyme catalyses isopentenyl diphosphate + (2E,6E)-farnesyl diphosphate = (2E,6E,10E)-geranylgeranyl diphosphate + diphosphate. The catalysed reaction is isopentenyl diphosphate + (2E,6E,10E)-geranylgeranyl diphosphate = (2E,6E,10E,14E)-geranylfarnesyl diphosphate + diphosphate. It catalyses the reaction (2E,6E,10E)-geranylgeranyl diphosphate = variediene + diphosphate. It carries out the reaction (2E,6E,10E,14E)-geranylfarnesyl diphosphate = (R,2E)-alpha-cericerene + diphosphate. Its pathway is secondary metabolite biosynthesis; terpenoid biosynthesis. Its function is as follows. Bifunctional terpene synthase that converts dimethylallyl diphosphate (DMAPP) and isopentenyl diphosphate (IPP) into variediene as a single product. The C-terminal prenyltransferase (PT) domain of EvVS catalyzes formation of geranylgeranyl pyrophosphate (GGPP), whereas the N-terminal terpene cyclase (TC) domain catalyzes the cyclization of GGPP to variediene. The PT domain can also synthesize geranylfarnesyl pyrophosphate (GFPP) from the C5 isoprene units in vitro, while the TC domain is able to cyclize GFPP to the sesterterpene (2E)-alpha-cericerene. The sequence is that of Variediene synthase from Emericella variicolor (Aspergillus stellatus).